Here is a 95-residue protein sequence, read N- to C-terminus: Protein TusB (95 aa).

The protein belongs to the DsrH/TusB family. In terms of assembly, heterohexamer, formed by a dimer of trimers. The hexameric TusBCD complex contains 2 copies each of TusB, TusC and TusD. The TusBCD complex interacts with TusE.

It is found in the cytoplasm. In terms of biological role, part of a sulfur-relay system required for 2-thiolation of 5-methylaminomethyl-2-thiouridine (mnm(5)s(2)U) at tRNA wobble positions. This is Protein TusB from Klebsiella pneumoniae subsp. pneumoniae (strain ATCC 700721 / MGH 78578).